Consider the following 188-residue polypeptide: GMP synthase [glutamine-hydrolyzing] subunit A (188 aa).

Positions 2-188 constitute a Glutamine amidotransferase type-1 domain; that stretch reads KVAVIYFGGQ…FKNFIKICRK (187 aa). Cysteine 79 functions as the Nucleophile in the catalytic mechanism. Catalysis depends on residues histidine 166 and glutamate 168.

Heterodimer composed of a glutamine amidotransferase subunit (A) and a GMP-binding subunit (B).

It catalyses the reaction XMP + L-glutamine + ATP + H2O = GMP + L-glutamate + AMP + diphosphate + 2 H(+). Its pathway is purine metabolism; GMP biosynthesis; GMP from XMP (L-Gln route): step 1/1. Functionally, catalyzes the synthesis of GMP from XMP. This Sulfolobus acidocaldarius (strain ATCC 33909 / DSM 639 / JCM 8929 / NBRC 15157 / NCIMB 11770) protein is GMP synthase [glutamine-hydrolyzing] subunit A.